We begin with the raw amino-acid sequence, 352 residues long: Alanine racemase (352 aa).

K33 acts as the Proton acceptor; specific for D-alanine in catalysis. Position 33 is an N6-(pyridoxal phosphate)lysine (K33). R129 is a substrate binding site. The Proton acceptor; specific for L-alanine role is filled by Y250. M298 contributes to the substrate binding site.

This sequence belongs to the alanine racemase family. It depends on pyridoxal 5'-phosphate as a cofactor.

It catalyses the reaction L-alanine = D-alanine. It functions in the pathway amino-acid biosynthesis; D-alanine biosynthesis; D-alanine from L-alanine: step 1/1. In terms of biological role, catalyzes the interconversion of L-alanine and D-alanine. May also act on other amino acids. The chain is Alanine racemase (alr) from Neisseria meningitidis serogroup C / serotype 2a (strain ATCC 700532 / DSM 15464 / FAM18).